The primary structure comprises 100 residues: Large ribosomal subunit protein uL23 (100 aa).

This sequence belongs to the universal ribosomal protein uL23 family. As to quaternary structure, part of the 50S ribosomal subunit. Contacts protein L29, and trigger factor when it is bound to the ribosome.

Its function is as follows. One of the early assembly proteins it binds 23S rRNA. One of the proteins that surrounds the polypeptide exit tunnel on the outside of the ribosome. Forms the main docking site for trigger factor binding to the ribosome. The polypeptide is Large ribosomal subunit protein uL23 (Shewanella amazonensis (strain ATCC BAA-1098 / SB2B)).